A 360-amino-acid chain; its full sequence is GTPase Obg (360 aa).

Positions 1–156 (MFVDSVEIII…KCVRLELKLI (156 aa)) constitute an Obg domain. In terms of domain architecture, OBG-type G spans 157–360 (ADIGLVGFPN…LKFVLLEALP (204 aa)). GTP is bound by residues 163–170 (GFPNAGKS), 188–192 (FTTLV), 210–213 (DIPG), 279–282 (NKCD), and 341–343 (SAL). The Mg(2+) site is built by S170 and T190.

Belongs to the TRAFAC class OBG-HflX-like GTPase superfamily. OBG GTPase family. In terms of assembly, monomer. Mg(2+) serves as cofactor.

It localises to the cytoplasm. An essential GTPase which binds GTP, GDP and possibly (p)ppGpp with moderate affinity, with high nucleotide exchange rates and a fairly low GTP hydrolysis rate. Plays a role in control of the cell cycle, stress response, ribosome biogenesis and in those bacteria that undergo differentiation, in morphogenesis control. The protein is GTPase Obg of Helicobacter pylori (strain Shi470).